A 1021-amino-acid chain; its full sequence is Inversin (1021 aa).

ANK repeat units follow at residues 7–36, 40–69, 73–102, 106–137, 141–170, 174–206, 213–243, 247–276, 281–310, 314–343, 349–378, 382–411, 415–444, 448–477, 481–510, and 516–546; these read QNPS…LRDS, FGRT…GINK, SQRT…DWRL, EEMT…EVDT, NKQT…NIGI, EGKI…TESL, EGRT…SVTA, LFRT…SGMI, QGAT…VRDE, EGRT…DIDI, YGGT…MVDP, MKHT…RVDL, DGHS…SPNL, AGRT…DPNI, EGRT…FPNH, and ERYT…SIAA. The D-box 1 signature appears at 483–491; sequence RTALHWSCN. The IQ 1 domain maps to 548 to 577; the sequence is QDIAASSIQALYKGYKVRRAFRERKKLLMR. 2 stretches are compositionally biased toward basic and acidic residues: residues 579 to 598 and 653 to 669; these read EQLR…REAE and SRRE…REPE. Disordered regions lie at residues 579–602, 632–691, and 704–868; these read EQLR…QQLS, KDSV…KKCP, and GPDT…GTCS. The segment covering 722 to 731 has biased composition (low complexity); the sequence is PAGSSRPGSA. 2 stretches are compositionally biased toward polar residues: residues 759–781 and 791–802; these read GAHS…TSKG and TGSQPSNNTSVT. A compositionally biased stretch (basic and acidic residues) spans 803–866; the sequence is RQKEKRQEKE…KEKEKKKDGT (64 aa). The D-box 2 signature appears at 862-870; it reads KKDGTCSKN. Positions 869 to 898 constitute an IQ 2 domain; that stretch reads KNQAAVVIQRAWRRSCVRGRIRKVLCRSLK.

As to quaternary structure, binds calmodulin via its IQ domains.

It is found in the cytoplasm. It localises to the cytoskeleton. Functionally, required for normal renal development and establishment of left-right axis. Probably acts as a molecular switch between different Wnt signaling pathways. Inhibits the canonical Wnt pathway by targeting cytoplasmic disheveled for degradation by the ubiquitin-proteasome. This suggests that it is required in renal development to oppose the repression of terminal differentiation of tubular epithelial cells by Wnt signaling. The protein is Inversin (invs) of Danio rerio (Zebrafish).